Here is a 147-residue protein sequence, read N- to C-terminus: Hemoglobin subunit gamma-1 (147 aa).

At glycine 2 the chain carries N-acetylglycine; in form Hb F1. A Globin domain is found at 3-147 (HFTEEDKATI…VASALSSRYH (145 aa)). Threonine 13 carries the post-translational modification Phosphothreonine. Residues serine 45, serine 51, and serine 53 each carry the phosphoserine modification. Lysine 60 is subject to N6-acetyllysine. Histidine 64 contributes to the heme b binding site. Lysine 83 is subject to N6-acetyllysine. Position 93 (histidine 93) interacts with heme b. Cysteine 94 is modified (S-nitrosocysteine). At serine 140 the chain carries Phosphoserine.

The protein belongs to the globin family. Heterotetramer of two alpha chains and two gamma chains in fetal hemoglobin (Hb F). In the case of deletions affecting one or more of the alpha chains, the excess gamma chains form homotetramers that exhibit neither Bohr effect nor heme-heme cooperativity (hemoglobin Bart's). Acetylation of Gly-2 converts Hb F to the minor Hb F1. In terms of tissue distribution, red blood cells.

In terms of biological role, gamma chains make up the fetal hemoglobin F, in combination with alpha chains. In Homo sapiens (Human), this protein is Hemoglobin subunit gamma-1 (HBG1).